The sequence spans 194 residues: MTAIQLIVGLGNPGPEYEQTRHNAGALFVERLASAQRVSLTADKKYFGLTAKFSHQGNDVRLLIPTTYMNRSGQSVAALANFFRIKPEAILVAHDELDLPPGVAKLKRGGGHGGHNGLRDIIAQLGNQNDFHRLRLGIGHPGDAKLVSNFVLGRAPRAEQEKLDASIDFALGVLPDVLAGDFAKAMRELHSQKA.

A tRNA-binding site is contributed by Tyr17. His22 (proton acceptor) is an active-site residue. Residues Tyr68, Asn70, and Asn116 each contribute to the tRNA site.

The protein belongs to the PTH family. Monomer.

Its subcellular location is the cytoplasm. It carries out the reaction an N-acyl-L-alpha-aminoacyl-tRNA + H2O = an N-acyl-L-amino acid + a tRNA + H(+). In terms of biological role, hydrolyzes ribosome-free peptidyl-tRNAs (with 1 or more amino acids incorporated), which drop off the ribosome during protein synthesis, or as a result of ribosome stalling. Functionally, catalyzes the release of premature peptidyl moieties from peptidyl-tRNA molecules trapped in stalled 50S ribosomal subunits, and thus maintains levels of free tRNAs and 50S ribosomes. The protein is Peptidyl-tRNA hydrolase of Pseudomonas putida (strain ATCC 700007 / DSM 6899 / JCM 31910 / BCRC 17059 / LMG 24140 / F1).